The chain runs to 287 residues: Hypersensitive-induced response protein-like protein 2 (287 aa).

The N-myristoyl glycine moiety is linked to residue G2.

In terms of biological role, positive regulator of hypersensitive response (HR)-like cell death. May be involved in potassium ion channel regulation. The sequence is that of Hypersensitive-induced response protein-like protein 2 (HIRL2) from Oryza sativa subsp. japonica (Rice).